The primary structure comprises 318 residues: C1GALT1-specific chaperone 1 (318 aa).

The Cytoplasmic segment spans residues 1–6 (MLSESS). Residues 7–26 (SFLKGVMLGSIFCALITMLG) traverse the membrane as a helical; Signal-anchor for type II membrane protein segment. Residues 27–318 (HIRIGHGNRM…FLPPNGSDND (292 aa)) lie on the Lumenal side of the membrane.

It belongs to the glycosyltransferase 31 family. Beta3-Gal-T subfamily. Associates with core 1 beta-3-galactosyltransferase (C1GALT1), probably not with the soluble active form. Ubiquitously expressed. Abundantly expressed in salivary gland, stomach, small intestine, kidney, and testis and at intermediate levels in whole brain, cerebellum, spinal cord, thymus, spleen, trachea, lung, pancreas, ovary, and uterus.

It is found in the membrane. In terms of biological role, probable chaperone required for the generation of 1 O-glycan Gal-beta1-3GalNAc-alpha1-Ser/Thr (T antigen), which is a precursor for many extended O-glycans in glycoproteins. Probably acts as a specific molecular chaperone assisting the folding/stability of core 1 beta-3-galactosyltransferase (C1GALT1). This is C1GALT1-specific chaperone 1 (C1GALT1C1) from Homo sapiens (Human).